Consider the following 140-residue polypeptide: Ribosome maturation factor RimP (140 aa).

Belongs to the RimP family.

It localises to the cytoplasm. Required for maturation of 30S ribosomal subunits. This Campylobacter jejuni subsp. jejuni serotype O:2 (strain ATCC 700819 / NCTC 11168) protein is Ribosome maturation factor RimP.